Reading from the N-terminus, the 270-residue chain is Purine nucleoside phosphorylase BT_4389 (270 aa).

Histidine 79, cysteine 124, and histidine 141 together coordinate Zn(2+).

The protein belongs to the purine nucleoside phosphorylase YfiH/LACC1 family. As to quaternary structure, homodimer. It depends on Cu(2+) as a cofactor. Zn(2+) is required as a cofactor.

The enzyme catalyses adenosine + phosphate = alpha-D-ribose 1-phosphate + adenine. It carries out the reaction S-methyl-5'-thioadenosine + phosphate = 5-(methylsulfanyl)-alpha-D-ribose 1-phosphate + adenine. It catalyses the reaction inosine + phosphate = alpha-D-ribose 1-phosphate + hypoxanthine. The catalysed reaction is adenosine + H2O + H(+) = inosine + NH4(+). In terms of biological role, purine nucleoside enzyme that catalyzes the phosphorolysis of adenosine and inosine nucleosides, yielding D-ribose 1-phosphate and the respective free bases, adenine and hypoxanthine. Also catalyzes the phosphorolysis of S-methyl-5'-thioadenosine into adenine and S-methyl-5-thio-alpha-D-ribose 1-phosphate. Also has adenosine deaminase activity. The chain is Purine nucleoside phosphorylase BT_4389 from Bacteroides thetaiotaomicron (strain ATCC 29148 / DSM 2079 / JCM 5827 / CCUG 10774 / NCTC 10582 / VPI-5482 / E50).